Here is a 448-residue protein sequence, read N- to C-terminus: NADH oxidase (448 aa).

FAD contacts are provided by residues 7–11 (GSGAA), C42, V80, 110–113 (ATGA), and R132. Residue C42 is the Redox-active of the active site. Residues 152–167 (VAVV…MAYG), E179, and G243 each bind NAD(+). FAD-binding positions include 271 to 281 (TSIPNIYAVGD), G299, and T300. An NAD(+)-binding site is contributed by V328. Y423 contacts FAD.

This sequence belongs to the class-III pyridine nucleotide-disulfide oxidoreductase family. FAD serves as cofactor.

The enzyme catalyses 2 NADH + O2 + 2 H(+) = 2 NAD(+) + 2 H2O. Catalyzes the four-electron reduction of molecular oxygen to water. This is NADH oxidase from Methanocaldococcus jannaschii (strain ATCC 43067 / DSM 2661 / JAL-1 / JCM 10045 / NBRC 100440) (Methanococcus jannaschii).